Consider the following 98-residue polypeptide: Protein FAM24A (98 aa).

A signal peptide spans 1–29 (MFDLRTKVMIGIASTLLIAAIVLITVVFC).

It belongs to the FAM24 family.

It localises to the secreted. The chain is Protein FAM24A (Fam24a) from Rattus norvegicus (Rat).